Here is a 617-residue protein sequence, read N- to C-terminus: V-type proton ATPase catalytic subunit A (617 aa).

Thr-136 is subject to Phosphothreonine. ATP is bound at residue 250–257 (GAFGCGKT). Position 384 is a phosphoserine; by AMPK (Ser-384).

This sequence belongs to the ATPase alpha/beta chains family. As to quaternary structure, V-ATPase is a heteromultimeric enzyme made up of two complexes: the ATP-hydrolytic V1 complex and the proton translocation V0 complex. The V1 complex consists of three catalytic AB heterodimers that form a heterohexamer, three peripheral stalks each consisting of EG heterodimers, one central rotor including subunits D and F, and the regulatory subunits C and H. The proton translocation complex V0 consists of the proton transport subunit a, a ring of proteolipid subunits c9c'', rotary subunit d, subunits e and f, and the accessory subunits ATP6AP1/Ac45 and ATP6AP2/PRR. Interacts with the V0 complex V-ATPase subunit a4 ATP6V0A4. Interacts with WFS1. Interacts with alpha-crystallin B chain/CRYAB and with MTOR, forming a ternary complex. Post-translationally, phosphorylation at Ser-384 by AMPK down-regulates its enzyme activity.

Its subcellular location is the cytoplasm. It is found in the cytosol. The protein resides in the cytoplasmic vesicle. It localises to the secretory vesicle. The protein localises to the clathrin-coated vesicle membrane. Its subcellular location is the lysosome. The enzyme catalyses ATP + H2O + 4 H(+)(in) = ADP + phosphate + 5 H(+)(out). With respect to regulation, ATP hydrolysis occurs at the interface between the nucleotide-binding domains of subunits A and B. ATP hydrolysis triggers a conformational change in the subunits D and F, which induces a shift of subunit d. The c-ring is subsequently rotated and results in a continuous proton translocation across the membrane. In terms of biological role, catalytic subunit of the V1 complex of vacuolar(H+)-ATPase (V-ATPase), a multisubunit enzyme composed of a peripheral complex (V1) that hydrolyzes ATP and a membrane integral complex (V0) that translocates protons. V-ATPase is responsible for acidifying and maintaining the pH of intracellular compartments and in some cell types, is targeted to the plasma membrane, where it is responsible for acidifying the extracellular environment. In aerobic conditions, involved in intracellular iron homeostasis, thus triggering the activity of Fe(2+) prolyl hydroxylase (PHD) enzymes, and leading to HIF1A hydroxylation and subsequent proteasomal degradation. May play a role in neurite development and synaptic connectivity. The polypeptide is V-type proton ATPase catalytic subunit A (ATP6V1A) (Sus scrofa (Pig)).